Consider the following 330-residue polypeptide: Aspartate--ammonia ligase (330 aa).

This sequence belongs to the class-II aminoacyl-tRNA synthetase family. AsnA subfamily.

The protein resides in the cytoplasm. It carries out the reaction L-aspartate + NH4(+) + ATP = L-asparagine + AMP + diphosphate + H(+). It participates in amino-acid biosynthesis; L-asparagine biosynthesis; L-asparagine from L-aspartate (ammonia route): step 1/1. The polypeptide is Aspartate--ammonia ligase (Shigella boydii serotype 18 (strain CDC 3083-94 / BS512)).